The chain runs to 74 residues: Large ribosomal subunit protein bL28 (74 aa).

The protein belongs to the bacterial ribosomal protein bL28 family.

In Desulforapulum autotrophicum (strain ATCC 43914 / DSM 3382 / VKM B-1955 / HRM2) (Desulfobacterium autotrophicum), this protein is Large ribosomal subunit protein bL28.